The chain runs to 546 residues: MFS-type transporter patC (546 aa).

Residues 1–15 are compositionally biased toward polar residues; that stretch reads MSIDASPSESVLESQ. The disordered stretch occupies residues 1–29; the sequence is MSIDASPSESVLESQTPDRVDESIPIKAE. Positions 16-29 are enriched in basic and acidic residues; it reads TPDRVDESIPIKAE. 14 helical membrane passes run 41–61, 89–109, 113–133, 143–163, 171–191, 203–223, 245–265, 277–297, 318–338, 350–370, 379–399, 416–436, 447–467, and 515–535; these read IVGFRWLLVCIAVFSANLLYG, VGFTLGSVVFILPLGKAYAIF, WLFLGCLTMFAAGSALCGAAP, VWAGAGGAGMYLGNLNLITIL, VYVGLVGLIYGTGCILGPIIG, WSFYLNLVIFGVMSPIYVFLL, WVGTVLSAGMHISIILFIVFG, IALYVVSAVLTIAFVLSQYFC, LLLYIIMACGGAALFVAVYYI, GIMSAVRLLPFVCFYVATILL, GYFIIWYLMSGVFMLIGAVLM, ILMGLGMTTTQAAYAVGPAIV, FMNIGQGQSQLLGLAIASAIF, and VIVSSISDVYVMAISAGALYV.

This sequence belongs to the major facilitator superfamily. TCR/Tet family.

It is found in the vacuole membrane. The protein localises to the cell membrane. Functionally, MFS-type transporter; part of the gene cluster that mediates the biosynthesis of patulin, an acetate-derived tetraketide mycotoxin produced by several fungal species that shows antimicrobial properties against several bacteria. May be involved in the secretion of E-ascladiol to be converted to patulin by the secreted patulin synthase patE. The sequence is that of MFS-type transporter patC from Penicillium expansum (Blue mold rot fungus).